A 136-amino-acid chain; its full sequence is Peptide deformylase (136 aa).

Fe cation is bound by residues C85 and H126. E127 is a catalytic residue. A Fe cation-binding site is contributed by H130.

Belongs to the polypeptide deformylase family. The cofactor is Fe(2+).

The enzyme catalyses N-terminal N-formyl-L-methionyl-[peptide] + H2O = N-terminal L-methionyl-[peptide] + formate. In terms of biological role, removes the formyl group from the N-terminal Met of newly synthesized proteins. Requires at least a dipeptide for an efficient rate of reaction. N-terminal L-methionine is a prerequisite for activity but the enzyme has broad specificity at other positions. This chain is Peptide deformylase, found in Clostridium beijerinckii (strain ATCC 51743 / NCIMB 8052) (Clostridium acetobutylicum).